The chain runs to 458 residues: Probable asparagine--tRNA ligase, cytoplasmic (458 aa).

It belongs to the class-II aminoacyl-tRNA synthetase family.

It is found in the cytoplasm. The catalysed reaction is tRNA(Asn) + L-asparagine + ATP = L-asparaginyl-tRNA(Asn) + AMP + diphosphate + H(+). This is Probable asparagine--tRNA ligase, cytoplasmic from Enterocytozoon bieneusi (strain H348) (Microsporidian parasite).